The primary structure comprises 1353 residues: Adenylate cyclase type 9 (1353 aa).

Disordered stretches follow at residues Met-1–Ser-27 and Ser-51–Leu-73. Topologically, residues Met-1–Arg-117 are cytoplasmic. The segment covering Glu-16–Ser-27 has biased composition (polar residues). A compositionally biased stretch (low complexity) spans Ser-51–Arg-66. The helical transmembrane segment at Tyr-118–Met-138 threads the bilayer. Residues Lys-139 to Lys-141 lie on the Extracellular side of the membrane. A helical transmembrane segment spans residues Val-142–Phe-162. The Cytoplasmic segment spans residues Thr-163 to His-171. The chain crosses the membrane as a helical span at residues Tyr-172–Phe-192. At Gln-193 to Asp-215 the chain is on the extracellular side. Residue Asn-206 is glycosylated (N-linked (GlcNAc...) asparagine). The chain crosses the membrane as a helical span at residues Thr-216–Tyr-235. Topologically, residues Thr-236–Pro-241 are cytoplasmic. Residues Leu-242–Phe-259 traverse the membrane as a helical segment. Residues Gly-260–Glu-280 lie on the Extracellular side of the membrane. The chain crosses the membrane as a helical span at residues Leu-281–Met-301. The Cytoplasmic portion of the chain corresponds to Ser-302–Ser-786. A disordered region spans residues Gln-349–Ile-375. Basic residues predominate over residues Lys-359–Ser-374. Mg(2+) contacts are provided by Asp-399, Ile-400, and Asp-443. ATP contacts are provided by residues Asp-399 to Thr-404, Leu-441 to Asp-443, and Arg-487. Disordered stretches follow at residues Asp-596–Ser-615 and Ser-641–Leu-685. A phosphoserine mark is found at Ser-610 and Ser-613. Residues Ser-661–Leu-676 are compositionally biased toward polar residues. Residues Ser-688, Ser-691, and Ser-706 each carry the phosphoserine modification. Residues Ser-787–Leu-807 form a helical membrane-spanning segment. Residues Lys-808–Pro-818 are Extracellular-facing. Residues Ala-819–Ile-839 traverse the membrane as a helical segment. Topologically, residues Arg-840 to Cys-867 are cytoplasmic. Residues Ile-868–Phe-888 form a helical membrane-spanning segment. At Glu-889 to Asn-891 the chain is on the extracellular side. A helical transmembrane segment spans residues Ile-892–Phe-912. Residues Cys-913–Arg-920 are Cytoplasmic-facing. Residues Ser-921–Gln-941 form a helical membrane-spanning segment. The Extracellular segment spans residues Asp-942 to Ala-975. N-linked (GlcNAc...) asparagine glycans are attached at residues Asn-955 and Asn-964. The chain crosses the membrane as a helical span at residues Ser-976–Leu-996. Over Asn-997–Val-1353 the chain is Cytoplasmic. Residues Lys-1108, Asp-1185–Trp-1187, Asn-1192–Arg-1196, and Lys-1232 each bind ATP. 5 positions are modified to phosphoserine: Ser-1257, Ser-1259, Ser-1295, Ser-1307, and Ser-1332. Positions Lys-1290–Glu-1314 are disordered. Positions Thr-1299–Glu-1314 are enriched in basic and acidic residues.

Belongs to the adenylyl cyclase class-4/guanylyl cyclase family. It depends on Mg(2+) as a cofactor. Mn(2+) serves as cofactor. As to expression, detected in brain, spleen, lung, liver and testis (at protein level). Detected in brain, especially in hippocampus, cerebellum and neocortex. Found in decreasing order in skeletal muscle, heart, adrenal gland, ovary and brain; and to a lesser extent, in kidney, liver, testis, lung, thymus and spleen.

It localises to the cell membrane. It carries out the reaction ATP = 3',5'-cyclic AMP + diphosphate. Insensitive to calcium/calmodulin, forskolin and somatostatin. Stimulated by beta-adrenergic receptor activation. Activity is down-regulated by calcium/calcineurin. Adenylyl cyclase that catalyzes the formation of the signaling molecule cAMP in response to activation of G protein-coupled receptors. Contributes to signaling cascades activated by CRH (corticotropin-releasing factor), corticosteroids and by beta-adrenergic receptors. The polypeptide is Adenylate cyclase type 9 (Adcy9) (Mus musculus (Mouse)).